The primary structure comprises 718 residues: Polyribonucleotide nucleotidyltransferase (718 aa).

Mg(2+)-binding residues include aspartate 497 and aspartate 503. A KH domain is found at 564–623 (PRLLTLKIEPEHIGMVIGPGGKTIKGITEQTSCKIDIADDGTVTIASSEGERAERARQMI). Residues 633–701 (GEVYLGRVTR…SKGRLNLTRL (69 aa)) enclose the S1 motif domain.

Belongs to the polyribonucleotide nucleotidyltransferase family. As to quaternary structure, interacts with RNase E (rne). Requires Mg(2+) as cofactor.

It localises to the cytoplasm. The catalysed reaction is RNA(n+1) + phosphate = RNA(n) + a ribonucleoside 5'-diphosphate. Its function is as follows. Involved in mRNA degradation. Catalyzes the phosphorolysis of single-stranded polyribonucleotides processively in the 3'- to 5'-direction. The chain is Polyribonucleotide nucleotidyltransferase from Synechocystis sp. (strain ATCC 27184 / PCC 6803 / Kazusa).